Here is a 216-residue protein sequence, read N- to C-terminus: uncharacterized protein (216 aa).

Residues 5-25 (YVKALVAVTVALGVLLPSTIS) traverse the membrane as a helical segment. 2 stretches are compositionally biased toward low complexity: residues 28 to 67 (KSFSGRSSSSYSSRSSSSSYSGSYKSSPKSSYSSGSSSSS) and 89 to 108 (KASSSSSKKSSGTFSGATSK). Residues 28–115 (KSFSGRSSSS…TSKVTGKTYS (88 aa)) are disordered. 2 helical membrane-spanning segments follow: residues 137 to 157 (GFAPSGWFGYYSGFTMGMFMI) and 183 to 203 (IAWIVDIIALIIILIIVIALI).

The protein localises to the cell membrane. This is an uncharacterized protein from Bacillus subtilis (strain 168).